A 179-amino-acid chain; its full sequence is Large ribosomal subunit protein uL5 (179 aa).

This sequence belongs to the universal ribosomal protein uL5 family. In terms of assembly, part of the 50S ribosomal subunit; part of the 5S rRNA/L5/L18/L25 subcomplex. Contacts the 5S rRNA and the P site tRNA. Forms a bridge to the 30S subunit in the 70S ribosome.

In terms of biological role, this is one of the proteins that bind and probably mediate the attachment of the 5S RNA into the large ribosomal subunit, where it forms part of the central protuberance. In the 70S ribosome it contacts protein S13 of the 30S subunit (bridge B1b), connecting the 2 subunits; this bridge is implicated in subunit movement. Contacts the P site tRNA; the 5S rRNA and some of its associated proteins might help stabilize positioning of ribosome-bound tRNAs. The polypeptide is Large ribosomal subunit protein uL5 (Serratia proteamaculans (strain 568)).